We begin with the raw amino-acid sequence, 646 residues long: Peptidylprolyl isomerase domain and WD repeat-containing protein 1 (646 aa).

The disordered stretch occupies residues 1-50 (MATESGSDSQLRRRRRRDPEGSEKTELSEREPALAVAGSEENDDENEERW). Ala-2 carries the N-acetylalanine modification. Positions 17 to 32 (RDPEGSEKTELSEREP) are enriched in basic and acidic residues. 4 WD repeats span residues 88-126 (MHRDVITHVVCTKTDFIITASHDGHVKFWKKIEEGIEFV), 131-170 (SHLGVIESIAVSSEGALFCSVGDDKAMKVFDVVNFDMINM), 221-260 (LHVSPLTQIRLNPVYKAVVSSDKSGMIEYWTGPPHEYKFP), and 278-319 (KCKA…RVFD). Residues 490–645 (VSDSAIVHTS…EDVSIINITV (156 aa)) enclose the PPIase cyclophilin-type domain.

This sequence belongs to the cyclophilin-type PPIase family. PPIL1 subfamily. Identified in the spliceosome C complex.

Its subcellular location is the nucleus. It catalyses the reaction [protein]-peptidylproline (omega=180) = [protein]-peptidylproline (omega=0). Inhibited by cyclosporin A (CsA). PPIase that catalyzes the cis-trans isomerization of proline imidic peptide bonds in oligopeptides and may therefore assist protein folding. May be involved in pre-mRNA splicing. The protein is Peptidylprolyl isomerase domain and WD repeat-containing protein 1 of Mus musculus (Mouse).